The sequence spans 220 residues: NADH-quinone oxidoreductase subunit I (220 aa).

2 4Fe-4S ferredoxin-type domains span residues 71–102 and 112–141; these read LQRL…IITH and DSYT…MGNR. Residues Cys82, Cys85, Cys88, Cys92, Cys121, Cys124, Cys127, and Cys131 each contribute to the [4Fe-4S] cluster site. Residues 187–220 are disordered; it reads MQATPLDYVQEPSKEESKEETPTNPESNKGDENV. The segment covering 198–207 has biased composition (basic and acidic residues); it reads PSKEESKEET.

Belongs to the complex I 23 kDa subunit family. NDH-1 is composed of 14 different subunits. Subunits NuoA, H, J, K, L, M, N constitute the membrane sector of the complex. [4Fe-4S] cluster is required as a cofactor.

It is found in the cell inner membrane. The catalysed reaction is a quinone + NADH + 5 H(+)(in) = a quinol + NAD(+) + 4 H(+)(out). In terms of biological role, NDH-1 shuttles electrons from NADH, via FMN and iron-sulfur (Fe-S) centers, to quinones in the respiratory chain. The immediate electron acceptor for the enzyme in this species is believed to be ubiquinone. Couples the redox reaction to proton translocation (for every two electrons transferred, four hydrogen ions are translocated across the cytoplasmic membrane), and thus conserves the redox energy in a proton gradient. This is NADH-quinone oxidoreductase subunit I from Helicobacter pylori (strain Shi470).